The sequence spans 511 residues: Exodeoxyribonuclease 7 large subunit (511 aa).

This sequence belongs to the XseA family. In terms of assembly, heterooligomer composed of large and small subunits.

It localises to the cytoplasm. It catalyses the reaction Exonucleolytic cleavage in either 5'- to 3'- or 3'- to 5'-direction to yield nucleoside 5'-phosphates.. Its function is as follows. Bidirectionally degrades single-stranded DNA into large acid-insoluble oligonucleotides, which are then degraded further into small acid-soluble oligonucleotides. This Brucella abortus (strain S19) protein is Exodeoxyribonuclease 7 large subunit.